A 255-amino-acid chain; its full sequence is Geranylgeranylglyceryl phosphate synthase (255 aa).

2 residues coordinate Mg(2+): Asp-25 and Ser-54. Sn-glycerol 1-phosphate is bound by residues 173 to 179 (YLEGGSG), 203 to 204 (GG), and 225 to 226 (GT).

Belongs to the GGGP/HepGP synthase family. Group II subfamily. Mg(2+) serves as cofactor.

The protein localises to the cytoplasm. It catalyses the reaction sn-glycerol 1-phosphate + (2E,6E,10E)-geranylgeranyl diphosphate = sn-3-O-(geranylgeranyl)glycerol 1-phosphate + diphosphate. It participates in membrane lipid metabolism; glycerophospholipid metabolism. Prenyltransferase that catalyzes the transfer of the geranylgeranyl moiety of geranylgeranyl diphosphate (GGPP) to the C3 hydroxyl of sn-glycerol-1-phosphate (G1P). This reaction is the first ether-bond-formation step in the biosynthesis of archaeal membrane lipids. This Thermofilum pendens (strain DSM 2475 / Hrk 5) protein is Geranylgeranylglyceryl phosphate synthase.